Consider the following 81-residue polypeptide: Cysteine-rich and transmembrane domain-containing protein PCC1 (81 aa).

Positions 1–22 (MNQSAQNYFSVQKPSETSSGPY) are enriched in polar residues. Positions 1 to 34 (MNQSAQNYFSVQKPSETSSGPYTSPPPIGYPTRD) are disordered. A helical transmembrane segment spans residues 56–74 (AIMSCFSTCMECIFCCGVC).

The protein belongs to the CYSTM1 family. In terms of tissue distribution, expressed at very low levels in seedlings and petioles, and at higher levels in leaves. Also present in phloem sap.

It is found in the cell membrane. Its function is as follows. Modulates resistance against pathogens including oomycetes (e.g. Hyaloperonospora parasitica and Phytophthora brassicae) and fungi (e.g. Phytophthora brassicae). Controls the abscisic acid-mediated (ABA) signaling pathways. Regulator of the flowering time in response to stress (e.g. UV-C). Regulates polar lipid content; promotes phosphatidylinositol (PI) and 18:0 but prevents 18:2 and 18:3 polar lipids accumulation. The protein is Cysteine-rich and transmembrane domain-containing protein PCC1 (PCC1) of Arabidopsis thaliana (Mouse-ear cress).